Here is a 357-residue protein sequence, read N- to C-terminus: Glucose-6-phosphatase catalytic subunit 1 (357 aa).

At methionine 1–aspartate 28 the chain is on the lumenal side. A helical membrane pass occupies residues tryptophan 29–isoleucine 49. Residues tryptophan 50–lysine 60 lie on the Cytoplasmic side of the membrane. The helical transmembrane segment at leucine 61–glycine 81 threads the bilayer. Residues glutamine 82 to serine 117 lie on the Lumenal side of the membrane. Arginine 83 lines the substrate pocket. A glycan (N-linked (GlcNAc...) asparagine) is linked at asparagine 96. The chain crosses the membrane as a helical span at residues glycine 118 to phenylalanine 138. The active-site Proton donor is the histidine 119. The Cytoplasmic segment spans residues arginine 139–arginine 147. Residues phenylalanine 148 to leucine 168 form a helical membrane-spanning segment. Over serine 169 to arginine 170 the chain is Lumenal. Position 170 (arginine 170) interacts with substrate. A helical membrane pass occupies residues isoleucine 171–valine 191. Histidine 176 (nucleophile) is an active-site residue. Residues alanine 192–tyrosine 209 are Cytoplasmic-facing. The chain crosses the membrane as a helical span at residues phenylalanine 210–leucine 230. Topologically, residues glycine 231–aspartate 254 are lumenal. The helical transmembrane segment at threonine 255–leucine 275 threads the bilayer. Topologically, residues asparagine 276–tryptophan 291 are cytoplasmic. A helical transmembrane segment spans residues phenylalanine 292–leucine 312. Over lysine 313–leucine 320 the chain is Lumenal. A helical transmembrane segment spans residues isoleucine 321 to isoleucine 341. The Cytoplasmic portion of the chain corresponds to proline 342–valine 357. Positions lysine 354–valine 357 match the Prevents secretion from ER motif.

The protein belongs to the glucose-6-phosphatase family.

It localises to the endoplasmic reticulum membrane. The enzyme catalyses D-glucose 6-phosphate + H2O = D-glucose + phosphate. It participates in carbohydrate biosynthesis; gluconeogenesis. Hydrolyzes glucose-6-phosphate to glucose in the endoplasmic reticulum. Forms with the glucose-6-phosphate transporter (SLC37A4/G6PT) the complex responsible for glucose production in the terminal step of glycogenolysis and gluconeogenesis. Hence, it is the key enzyme in homeostatic regulation of blood glucose levels. This chain is Glucose-6-phosphatase catalytic subunit 1 (G6PC1), found in Bos taurus (Bovine).